A 164-amino-acid polypeptide reads, in one-letter code: Phosphopantetheine adenylyltransferase (164 aa).

Position 9 (serine 9) interacts with substrate. Residues 9 to 10 (SF) and histidine 17 contribute to the ATP site. 3 residues coordinate substrate: lysine 41, leucine 73, and lysine 87. ATP contacts are provided by residues 88–90 (GLR), glutamate 98, and 123–129 (YSYISSS).

This sequence belongs to the bacterial CoaD family. Homohexamer. Mg(2+) is required as a cofactor.

It localises to the cytoplasm. It catalyses the reaction (R)-4'-phosphopantetheine + ATP + H(+) = 3'-dephospho-CoA + diphosphate. The protein operates within cofactor biosynthesis; coenzyme A biosynthesis; CoA from (R)-pantothenate: step 4/5. In terms of biological role, reversibly transfers an adenylyl group from ATP to 4'-phosphopantetheine, yielding dephospho-CoA (dPCoA) and pyrophosphate. In Clostridium perfringens (strain 13 / Type A), this protein is Phosphopantetheine adenylyltransferase.